We begin with the raw amino-acid sequence, 347 residues long: Tryptophan--tRNA ligase (347 aa).

ATP-binding positions include 10-12 (QAS) and 18-19 (GN). Positions 11 to 19 (ASGRQHLGN) match the 'HIGH' region motif. Position 140 (aspartate 140) interacts with L-tryptophan. ATP contacts are provided by residues 152 to 154 (GND), isoleucine 191, and 200 to 204 (KMSKS). Positions 200 to 204 (KMSKS) match the 'KMSKS' region motif.

The protein belongs to the class-I aminoacyl-tRNA synthetase family. In terms of assembly, homodimer.

It localises to the cytoplasm. The enzyme catalyses tRNA(Trp) + L-tryptophan + ATP = L-tryptophyl-tRNA(Trp) + AMP + diphosphate + H(+). In terms of biological role, catalyzes the attachment of tryptophan to tRNA(Trp). This chain is Tryptophan--tRNA ligase, found in Mycoplasma genitalium (strain ATCC 33530 / DSM 19775 / NCTC 10195 / G37) (Mycoplasmoides genitalium).